The sequence spans 134 residues: ATP synthase epsilon chain (134 aa).

It belongs to the ATPase epsilon chain family. In terms of assembly, F-type ATPases have 2 components, CF(1) - the catalytic core - and CF(0) - the membrane proton channel. CF(1) has five subunits: alpha(3), beta(3), gamma(1), delta(1), epsilon(1). CF(0) has three main subunits: a, b and c.

The protein localises to the cell inner membrane. Produces ATP from ADP in the presence of a proton gradient across the membrane. The protein is ATP synthase epsilon chain of Nitratidesulfovibrio vulgaris (strain ATCC 29579 / DSM 644 / CCUG 34227 / NCIMB 8303 / VKM B-1760 / Hildenborough) (Desulfovibrio vulgaris).